The chain runs to 127 residues: Calcium-binding protein PBP1 (127 aa).

Residues 1-18 (MASPKSSTRPNQENQEPQ) are compositionally biased toward polar residues. Residues 1–20 (MASPKSSTRPNQENQEPQFQ) are disordered. An EF-hand domain is found at 72 to 107 (LTDDDVRYMINEGDFDRDGALNQMEFCVLMFRLSPE). 4 residues coordinate Ca(2+): Asp85, Asp87, Asp89, and Glu96.

Interacts with PID.

Potential calcium sensor that binds calcium in vitro. This chain is Calcium-binding protein PBP1 (PBP1), found in Arabidopsis thaliana (Mouse-ear cress).